The following is a 142-amino-acid chain: Endoribonuclease YbeY (142 aa).

Zn(2+) contacts are provided by histidine 100, histidine 104, and histidine 110.

It belongs to the endoribonuclease YbeY family. Zn(2+) is required as a cofactor.

Its subcellular location is the cytoplasm. Its function is as follows. Single strand-specific metallo-endoribonuclease involved in late-stage 70S ribosome quality control and in maturation of the 3' terminus of the 16S rRNA. In Helicobacter pylori (strain G27), this protein is Endoribonuclease YbeY.